Consider the following 376-residue polypeptide: Bifunctional enzyme IspD/IspF (376 aa).

The segment at 1–220 is 2-C-methyl-D-erythritol 4-phosphate cytidylyltransferase; the sequence is MRIAAILVAG…RSMSISMIPR (220 aa). The segment at 220–376 is 2-C-methyl-D-erythritol 2,4-cyclodiphosphate synthase; the sequence is RIGTGYDVHA…QAAVIIMIPA (157 aa). Asp226 and His228 together coordinate a divalent metal cation. 4-CDP-2-C-methyl-D-erythritol 2-phosphate contacts are provided by residues 226–228 and 252–253; these read DVH and HS. Position 260 (His260) interacts with a divalent metal cation. Residues 274-276, 350-353, Phe357, and Arg360 contribute to the 4-CDP-2-C-methyl-D-erythritol 2-phosphate site; these read DIG and TTSE.

It in the N-terminal section; belongs to the IspD/TarI cytidylyltransferase family. IspD subfamily. The protein in the C-terminal section; belongs to the IspF family. A divalent metal cation is required as a cofactor.

It carries out the reaction 2-C-methyl-D-erythritol 4-phosphate + CTP + H(+) = 4-CDP-2-C-methyl-D-erythritol + diphosphate. The catalysed reaction is 4-CDP-2-C-methyl-D-erythritol 2-phosphate = 2-C-methyl-D-erythritol 2,4-cyclic diphosphate + CMP. Its pathway is isoprenoid biosynthesis; isopentenyl diphosphate biosynthesis via DXP pathway; isopentenyl diphosphate from 1-deoxy-D-xylulose 5-phosphate: step 2/6. The protein operates within isoprenoid biosynthesis; isopentenyl diphosphate biosynthesis via DXP pathway; isopentenyl diphosphate from 1-deoxy-D-xylulose 5-phosphate: step 4/6. Its function is as follows. Bifunctional enzyme that catalyzes the formation of 4-diphosphocytidyl-2-C-methyl-D-erythritol from CTP and 2-C-methyl-D-erythritol 4-phosphate (MEP) (IspD), and catalyzes the conversion of 4-diphosphocytidyl-2-C-methyl-D-erythritol 2-phosphate (CDP-ME2P) to 2-C-methyl-D-erythritol 2,4-cyclodiphosphate (ME-CPP) with a corresponding release of cytidine 5-monophosphate (CMP) (IspF). The protein is Bifunctional enzyme IspD/IspF of Granulibacter bethesdensis (strain ATCC BAA-1260 / CGDNIH1).